Reading from the N-terminus, the 192-residue chain is Cytochrome b-245 light chain (192 aa).

Residues 2 to 7 are Cytoplasmic-facing; sequence GQIEWA. Residues 8-30 form a helical membrane-spanning segment; the sequence is MWANEQALASGLILITGGIVATA. Residues 31 to 35 are Extracellular-facing; that stretch reads GRFTQ. A helical membrane pass occupies residues 36–53; the sequence is WYFGAYSIVAGVLICLLE. The Cytoplasmic portion of the chain corresponds to 54–69; sequence YPRGKRKKGSTMERCG. Residues 70 to 80 lie within the membrane without spanning it; it reads QKYLTAVVKLF. Over 81-86 the chain is Cytoplasmic; sequence GPLTRN. The chain crosses the membrane as a helical span at residues 87-104; the sequence is YYVRAVLHLLLSVPAGFL. Leu-105 is a topological domain (extracellular). A helical transmembrane segment spans residues 106–126; it reads ATILGTVCLAIASVIYLLAAI. The Cytoplasmic segment spans residues 127–192; that stretch reads RGEQWTPIEP…NPIPVTDEVV (66 aa). The tract at residues 134–192 is disordered; that stretch reads IEPKPKERPQVGGTIKQPPTNPPPRPPAEVRKKPSEAEEEAASAGGPQVNPIPVTDEVV. Residue Thr-147 is modified to Phosphothreonine. Lys-149 is covalently cross-linked (Glycyl lysine isopeptide (Lys-Gly) (interchain with G-Cter in ubiquitin)). A phosphoserine mark is found at Ser-168 and Ser-176.

It belongs to the p22phox family. Component of the phagocyte NADPH oxidase core complex/cytochrome b558 complex, composed of CYBB (heavy chain (beta)) and CYBA (light chain (alpha)). Component of the phagocyte NADPH oxidase complex composed of an obligatory core heterodimer formed by the membrane proteins CYBA and CYBB and the cytosolic regulatory subunits NCF1/p47-phox, NCF2/p67-phox, NCF4/p40-phox and the small GTPase RAC1 or RAC2. Interacts with NCF1 (via SH3 domain). Interacts with SH3PXD2A. Interacts with DUOX1, DUOX2 and TPO. Interacts with NOX4; this interaction mediates superoxide generation. Interacts with calprotectin (S100A8/9). Interacts with GBP7. Interacts with NOXO1. Forms a heterodimer with NOX3 and is essential for activity and cell membrane localization of NOX3. Interacts with NOX1. In terms of processing, phosphorylation at Thr-147 enhances NADPH oxidase activity by promoting NCF1/p47-phox binding. Post-translationally, ubiquitinated at Lys-149 likely by RNF145. As to expression, expressed to a relatively high level in kidney, spleen, thymus and lung, and to a lower level in aorta, adrenals, and heart. Expression is not detected in liver or brain.

It is found in the cell membrane. Functionally, subunit of NADPH oxidase complexes that is required for the NADPH oxidase activity that generates, in various cell types, superoxide from molecular oxygen utilizing NADPH as an electron donor. Subunit of the phagocyte NADPH oxidase complex that mediates the transfer of electrons from cytosolic NADPH to O2 to produce the superoxide anion (O2(-)). In the activated complex, electrons are first transferred from NADPH to flavin adenine dinucleotide (FAD) and subsequently transferred via two heme molecules to molecular oxygen, producing superoxide through an outer-sphere reaction. Activation of the NADPH oxidase complex is initiated by the assembly of cytosolic subunits of the NADPH oxidase complex with the core NADPH oxidase complex to form a complex at the plasma membrane or phagosomal membrane. This activation process is initiated by phosphorylation dependent binding of the cytosolic NCF1/p47-phox subunit to the C-terminus of CYBA/p22-phox. Aassociates with NOX3 to form a functional NADPH oxidase constitutively generating superoxide. The polypeptide is Cytochrome b-245 light chain (Rattus norvegicus (Rat)).